The sequence spans 363 residues: Phospho-N-acetylmuramoyl-pentapeptide-transferase (363 aa).

Helical transmembrane passes span 33–53 (YAVL…GVLP), 82–102 (GVIF…PSFV), 105–125 (LILL…CAQV), 133–153 (GALD…FYFH), 166–186 (PVFV…WMSI), 198–218 (LSGA…YFLL), 227–247 (LLVP…ALAG), 271–291 (ALGF…LLLM), 295–315 (VILV…FFHV), and 340–360 (VLLR…GVLF).

The protein belongs to the glycosyltransferase 4 family. MraY subfamily. Requires Mg(2+) as cofactor.

The protein localises to the cell inner membrane. The enzyme catalyses UDP-N-acetyl-alpha-D-muramoyl-L-alanyl-gamma-D-glutamyl-meso-2,6-diaminopimeloyl-D-alanyl-D-alanine + di-trans,octa-cis-undecaprenyl phosphate = di-trans,octa-cis-undecaprenyl diphospho-N-acetyl-alpha-D-muramoyl-L-alanyl-D-glutamyl-meso-2,6-diaminopimeloyl-D-alanyl-D-alanine + UMP. Its pathway is cell wall biogenesis; peptidoglycan biosynthesis. Its function is as follows. Catalyzes the initial step of the lipid cycle reactions in the biosynthesis of the cell wall peptidoglycan: transfers peptidoglycan precursor phospho-MurNAc-pentapeptide from UDP-MurNAc-pentapeptide onto the lipid carrier undecaprenyl phosphate, yielding undecaprenyl-pyrophosphoryl-MurNAc-pentapeptide, known as lipid I. In Treponema pallidum (strain Nichols), this protein is Phospho-N-acetylmuramoyl-pentapeptide-transferase.